The following is a 431-amino-acid chain: GTPase Obg (431 aa).

The 158-residue stretch at 1–158 folds into the Obg domain; that stretch reads MFVDQVKINV…REIRLELKVL (158 aa). The segment at 125–145 is disordered; it reads GNIHFASPKNPAPEIAENGEP. Residues 159 to 335 enclose the OBG-type G domain; it reads ADVGLVGFPS…LLQRTADMLA (177 aa). Residues 165 to 172, 190 to 194, 212 to 215, 282 to 285, and 316 to 318 contribute to the GTP site; these read GFPSVGKS, FTTLV, DLPG, NKMD, and SAL. Residues Ser-172 and Thr-192 each contribute to the Mg(2+) site. Residues 353-431 form the OCT domain; the sequence is YNFQPEAEFT…IDDFTFEYMA (79 aa).

This sequence belongs to the TRAFAC class OBG-HflX-like GTPase superfamily. OBG GTPase family. Monomer. Mg(2+) serves as cofactor.

It is found in the cytoplasm. In terms of biological role, an essential GTPase which binds GTP, GDP and possibly (p)ppGpp with moderate affinity, with high nucleotide exchange rates and a fairly low GTP hydrolysis rate. Plays a role in control of the cell cycle, stress response, ribosome biogenesis and in those bacteria that undergo differentiation, in morphogenesis control. The sequence is that of GTPase Obg from Levilactobacillus brevis (strain ATCC 367 / BCRC 12310 / CIP 105137 / JCM 1170 / LMG 11437 / NCIMB 947 / NCTC 947) (Lactobacillus brevis).